We begin with the raw amino-acid sequence, 500 residues long: Glycerol kinase (500 aa).

An ADP-binding site is contributed by T13. 3 residues coordinate ATP: T13, T14, and S15. T13 is a sn-glycerol 3-phosphate binding site. R17 contacts ADP. Residues R83, E84, Y135, and D244 each contribute to the sn-glycerol 3-phosphate site. Glycerol contacts are provided by R83, E84, Y135, D244, and Q245. ADP-binding residues include T266 and G309. 4 residues coordinate ATP: T266, G309, Q313, and G410. 2 residues coordinate ADP: G410 and N414.

The protein belongs to the FGGY kinase family.

It catalyses the reaction glycerol + ATP = sn-glycerol 3-phosphate + ADP + H(+). It participates in polyol metabolism; glycerol degradation via glycerol kinase pathway; sn-glycerol 3-phosphate from glycerol: step 1/1. With respect to regulation, inhibited by fructose 1,6-bisphosphate (FBP). Functionally, key enzyme in the regulation of glycerol uptake and metabolism. Catalyzes the phosphorylation of glycerol to yield sn-glycerol 3-phosphate. This Burkholderia cenocepacia (strain HI2424) protein is Glycerol kinase.